A 181-amino-acid chain; its full sequence is Large ribosomal subunit protein uL5c (181 aa).

The protein belongs to the universal ribosomal protein uL5 family. Part of the 50S ribosomal subunit; contacts the 5S rRNA.

Its subcellular location is the plastid. The protein resides in the chloroplast. Binds 5S rRNA, forms part of the central protuberance of the 50S subunit. The sequence is that of Large ribosomal subunit protein uL5c (rpl5) from Guillardia theta (Cryptophyte).